A 742-amino-acid chain; its full sequence is Two-component response regulator-like PRR37 (742 aa).

One can recognise a Response regulatory domain in the interval 63 to 181 (KVLLVDSDDS…ELKNLWQHVW (119 aa)). The segment covering 186-195 (SSSGSGSESG) has biased composition (low complexity). 7 disordered regions span residues 186 to 249 (SSSG…SWTK), 290 to 346 (PCTS…PLQN), 377 to 402 (QQAA…NRDN), 478 to 517 (MKSN…NKER), 533 to 568 (FHPA…GEVQ), 590 to 671 (NGGS…GNDM), and 697 to 742 (NFGK…AADR). Residues 236-248 (DNGSGTQAQSSWT) show a composition bias toward polar residues. Residues 299-313 (KQKETNDDFKGKDLE) are compositionally biased toward basic and acidic residues. Residues 318–330 (RNLNTAYQSSPNE) are compositionally biased toward polar residues. Over residues 331–341 (RSIKPTDRRNE) the composition is skewed to basic and acidic residues. The segment covering 490-502 (GSNGSSNNNDMGS) has biased composition (low complexity). The segment covering 503 to 512 (TTKNVVTKPS) has biased composition (polar residues). The span at 618–634 (NGSNSGSNNGSNGQNGS) shows a compositional bias: low complexity. A compositionally biased stretch (gly residues) spans 656–667 (GPGGGNGSGSGS). The CCT domain occupies 682 to 724 (RVAAVIKFRQKRKERNFGKKVRYQSRKRLAEQRPRVRGQFVRQ). Over residues 697–708 (NFGKKVRYQSRK) the composition is skewed to basic residues. The span at 719–731 (GQFVRQAVQDQQQ) shows a compositional bias: low complexity.

This sequence belongs to the ARR-like family.

The protein resides in the nucleus. Functionally, probable transcription factor involved in the regulation of flowering time under long day (LD) conditions. Functions as a repressor of flowering. Controls flowering time by negatively regulating the expression of HD3A. Acts downstream of the phytochrome B to repress the expression of EHD1, an activator of the flowering promoter genes HD3A and RFT1. Controls photoperiodic flowering response. Seems to be one of the component of the circadian clock. Expression of several members of the ARR-like family is controlled by circadian rhythm. The particular coordinated sequential expression of PRR73, PRR37, PRR95, PRR59 and PPR1 result to circadian waves that may be at the basis of the endogenous circadian clock. This is Two-component response regulator-like PRR37 from Oryza sativa subsp. japonica (Rice).